A 306-amino-acid chain; its full sequence is Putative dihydroorotate dehydrogenase A (fumarate) (306 aa).

Residues S20 and 44–45 each bind FMN; that span reads KG. Substrate is bound by residues K44 and 68–72; that span reads NSIGL. Positions 98 and 126 each coordinate FMN. N126 contributes to the substrate binding site. The active-site Nucleophile is C129. Positions 164 and 190 each coordinate FMN. A substrate-binding site is contributed by 191 to 192; sequence NT. FMN-binding positions include G216, 244–245, and 266–267; these read GG and GT.

The protein belongs to the dihydroorotate dehydrogenase family. Type 1 subfamily. As to quaternary structure, homodimer. Requires FMN as cofactor.

Its subcellular location is the cytoplasm. The catalysed reaction is (S)-dihydroorotate + fumarate = orotate + succinate. The protein operates within pyrimidine metabolism; UMP biosynthesis via de novo pathway. Its function is as follows. Catalyzes the conversion of dihydroorotate to orotate with fumarate as the electron acceptor. The polypeptide is Putative dihydroorotate dehydrogenase A (fumarate) (pyrD) (Aquifex aeolicus (strain VF5)).